A 1027-amino-acid polypeptide reads, in one-letter code: Kinesin heavy chain isoform 5A (1027 aa).

Alanine 2 carries the post-translational modification N-acetylalanine. The 319-residue stretch at serine 9–isoleucine 327 folds into the Kinesin motor domain. Glycine 86–threonine 93 contributes to the ATP binding site. The microtubule-binding stretch occupies residues valine 174–lysine 315. The necessary for interaction with ZFYVE27 stretch occupies residues glutamate 271–alanine 361. Residues alanine 331–tyrosine 906 adopt a coiled-coil conformation. Residues threonine 353 to serine 1027 are interaction with BICD2. Residue threonine 397 is modified to Phosphothreonine. Residues tyrosine 906–glycine 937 are disordered. The segment at lysine 907–serine 1027 is globular.

This sequence belongs to the TRAFAC class myosin-kinesin ATPase superfamily. Kinesin family. Kinesin subfamily. In terms of assembly, oligomer composed of two heavy chains and two light chains. Interacts with GRIP1. Interacts with FMR1 (via C-terminus); this interaction is increased in a mGluR-dependent manner. Interacts with BORCS5. Interacts with ZFYVE27. Interacts with VAPA, VAPB, SURF4, RAB11A (GDP-bound form), RAB11B (GDP-bound form) and RTN3 in a ZFYVE27-dependent manner. Interacts with BICD2. Interacts with DTNB.

The protein localises to the cytoplasm. It localises to the perinuclear region. The protein resides in the cytoskeleton. It is found in the perikaryon. The catalysed reaction is ATP + H2O + a kinesin associated with a microtubule at position (n) = ADP + phosphate a kinesin associated with a microtubule at position (n+1, toward the plus end).. Microtubule-dependent motor required for slow axonal transport of neurofilament proteins (NFH, NFM and NFL). Can induce formation of neurite-like membrane protrusions in non-neuronal cells in a ZFYVE27-dependent manner. The ZFYVE27-KIF5A complex contributes to the vesicular transport of VAPA, VAPB, SURF4, RAB11A, RAB11B and RTN3 proteins in neurons. Required for anterograde axonal transportation of MAPK8IP3/JIP3 which is essential for MAPK8IP3/JIP3 function in axon elongation. The protein is Kinesin heavy chain isoform 5A (Kif5a) of Mus musculus (Mouse).